We begin with the raw amino-acid sequence, 169 residues long: AGMGTSIHLAAALLAAQAGVDLLHVPYKGSTPAAADLIAGRLSMMVDSITAQQSFIKSGRVRALGVTSLQPAPSLPGIPPLAQAADQPNFEVLTWFGLFVPSRTSPDIVKVLNTAMNEALKTPEVQKALADIGASAQGGTSQALGVLWDNEIDRWGQLIVHHRLNTNEL.

The protein belongs to the UPF0065 (bug) family.

It is found in the periplasm. In Pseudomonas knackmussii (strain DSM 6978 / CCUG 54928 / LMG 23759 / B13), this protein is UPF0065 protein in clcB-clcD intergenic region.